A 979-amino-acid chain; its full sequence is Translation initiation factor IF-2 (979 aa).

The interval 68–386 is disordered; it reads VKQKQGTPAS…DKRDAASRAA (319 aa). 3 stretches are compositionally biased toward basic and acidic residues: residues 102–179, 217–229, and 260–273; these read QDMR…KPEE, EMEK…EVFR, and TKED…DADG. Positions 317–326 are enriched in polar residues; the sequence is RPAQQQSNAS. Basic and acidic residues predominate over residues 347–356; sequence DVQRQVKETL. Positions 478–646 constitute a tr-type G domain; the sequence is ARPPIVTVMG…KVLLEADILE (169 aa). The segment at 487-494 is G1; that stretch reads GHVDHGKT. GTP is bound at residue 487 to 494; the sequence is GHVDHGKT. Residues 512–516 form a G2 region; it reads GITQH. Residues 534–537 are G3; the sequence is DTPG. Residues 534–538 and 588–591 contribute to the GTP site; these read DTPGH and NKID. The G4 stretch occupies residues 588–591; that stretch reads NKID. The interval 624–626 is G5; that stretch reads SAK.

Belongs to the TRAFAC class translation factor GTPase superfamily. Classic translation factor GTPase family. IF-2 subfamily.

The protein resides in the cytoplasm. In terms of biological role, one of the essential components for the initiation of protein synthesis. Protects formylmethionyl-tRNA from spontaneous hydrolysis and promotes its binding to the 30S ribosomal subunits. Also involved in the hydrolysis of GTP during the formation of the 70S ribosomal complex. This Porphyromonas gingivalis (strain ATCC BAA-308 / W83) protein is Translation initiation factor IF-2.